The primary structure comprises 420 residues: Glycogen synthase kinase-3 beta (420 aa).

Polar residues predominate over residues 1-24 (MSGRPRTTSFAESCKPVQQPSSFG). The segment at 1 to 50 (MSGRPRTTSFAESCKPVQQPSSFGSMKVSRDKDGSKVTTVVATPGQGPDR) is disordered. One can recognise a Protein kinase domain in the interval 56-340 (YTDTKVIGNG…PLDACAHSFF (285 aa)). ATP-binding positions include 62–70 (IGNGSFGVV) and lysine 85. Aspartate 181 serves as the catalytic Proton acceptor. Residues 384–420 (NQAAVSTTSNTTSTSDSNTGERGSTNNAASASASNSS) form a disordered region. Composition is skewed to low complexity over residues 389–401 (STTS…SDSN) and 409–420 (NNAASASASNSS).

This sequence belongs to the protein kinase superfamily. CMGC Ser/Thr protein kinase family. GSK-3 subfamily. In terms of processing, phosphorylated. Activated by phosphorylation at Tyr-216.

It localises to the cytoplasm. The protein resides in the nucleus. Its subcellular location is the cell membrane. The catalysed reaction is L-seryl-[tau protein] + ATP = O-phospho-L-seryl-[tau protein] + ADP + H(+). It carries out the reaction L-threonyl-[tau protein] + ATP = O-phospho-L-threonyl-[tau protein] + ADP + H(+). In terms of biological role, plays a role in the organization of the formation of the main body axis of developing embryo. Acts as an inhibitor of differentiation of primary neurons. Inhibits the ability of ectopically expressed NEUROD1 and other bHLH factors to promote early retinal cell differentiation. May participate in the Wnt signaling pathway. May regulate the circadian clock via phosphorylation of the major clock components. The polypeptide is Glycogen synthase kinase-3 beta (gsk3b) (Xenopus laevis (African clawed frog)).